Here is a 342-residue protein sequence, read N- to C-terminus: MTSNFSQPVVQLCYEDVNGSCIETPYSPGSRVILYTAFSFGSLLAVFGNLLVMTSVLHFKQLHSPTNFLIASLACADFLVGVTVMLFSMVRTVESCWYFGAKFCTLHSCCDVAFCYSSVLHLCFICIDRYIVVTDPLVYATKFTVSVSGICISVSWILPLTYSGAVFYTGVNDDGLEELVSALNCVGGCQIIVSQGWVLIDFLLFFIPTLVMIILYSKIFLIAKQQAIKIETTSSKVESSSESYKIRVAKRERKAAKTLGVTVLAFVISWLPYTVDILIDAFMGFLTPAYIYEICCWSAYYNSAMNPLIYALFYPWFRKAIKLILSGDVLKASSSTISLFLE.

The Extracellular segment spans residues 1–31 (MTSNFSQPVVQLCYEDVNGSCIETPYSPGSR). 2 N-linked (GlcNAc...) asparagine glycosylation sites follow: Asn-4 and Asn-18. 2 cysteine pairs are disulfide-bonded: Cys-21-Cys-185 and Cys-104-Cys-189. A helical transmembrane segment spans residues 32-52 (VILYTAFSFGSLLAVFGNLLV). The Cytoplasmic portion of the chain corresponds to 53 to 67 (MTSVLHFKQLHSPTN). The chain crosses the membrane as a helical span at residues 68–88 (FLIASLACADFLVGVTVMLFS). Over 89–111 (MVRTVESCWYFGAKFCTLHSCCD) the chain is Extracellular. A helical membrane pass occupies residues 112–132 (VAFCYSSVLHLCFICIDRYIV). Residues 133–146 (VTDPLVYATKFTVS) are Cytoplasmic-facing. Residues 147–167 (VSGICISVSWILPLTYSGAVF) form a helical membrane-spanning segment. The Extracellular portion of the chain corresponds to 168 to 195 (YTGVNDDGLEELVSALNCVGGCQIIVSQ). The chain crosses the membrane as a helical span at residues 196–216 (GWVLIDFLLFFIPTLVMIILY). Over 217–258 (SKIFLIAKQQAIKIETTSSKVESSSESYKIRVAKRERKAAKT) the chain is Cytoplasmic. The helical transmembrane segment at 259 to 279 (LGVTVLAFVISWLPYTVDILI) threads the bilayer. Position 280 (Asp-280) is a topological domain, extracellular. A helical transmembrane segment spans residues 281 to 301 (AFMGFLTPAYIYEICCWSAYY). Residues 302–342 (NSAMNPLIYALFYPWFRKAIKLILSGDVLKASSSTISLFLE) are Cytoplasmic-facing.

This sequence belongs to the G-protein coupled receptor 1 family. In terms of tissue distribution, expressed in kidney and amygdala. Not expressed in other tissues or brain regions tested.

It is found in the cell membrane. Its function is as follows. Olfactory receptor specific for trace amines. Trace amine compounds are enriched in animal body fluids and act on trace amine-associated receptors (TAARs) to elicit both intraspecific and interspecific innate behaviors. Ligand-binding causes a conformation change that triggers signaling via G alpha proteins, possibly G(i)/G(o) G alpha proteins. In Homo sapiens (Human), this protein is Trace amine-associated receptor 8 (TAAR8).